A 97-amino-acid chain; its full sequence is Homeobox protein HD-9 (97 aa).

A DNA-binding region (homeobox) is located at residues 6 to 65; it reads MPAKKSRLSKAQRDFLDTYFEVNPHPNTQERAYIASQSLVSEEKIRNWFQNRRTRERGDC.

The protein resides in the nucleus. The sequence is that of Homeobox protein HD-9 (HD-9) from Encephalitozoon cuniculi (strain GB-M1) (Microsporidian parasite).